The sequence spans 707 residues: Terpene cyclase/mutase atnI (707 aa).

The span at 1 to 20 shows a compositional bias: polar residues; that stretch reads MGQHIASSESSTNGHVSLET. Positions 1 to 22 are disordered; it reads MGQHIASSESSTNGHVSLETNG. 4 PFTB repeats span residues 130 to 173, 494 to 535, 571 to 608, and 620 to 661; these read AVEI…RLLG, LRDA…VGKT, TAQGLGFIKQSQKPDGGWYGAWGVCFTYAGMFALETLA, and SRRG…VQTA.

The protein belongs to the terpene cyclase/mutase family.

The protein operates within secondary metabolite biosynthesis; terpenoid biosynthesis. In terms of biological role, terpene cyclase/mutase; part of the gene cluster that mediates the biosynthesis of the meroterpenoids arthripenoids. The pathway begins with the HR-PKS atnH that catalyzes two chain-extension steps to form a reduced triketide, which then primes the SAT domain in the NR-PKS atnG to initiate three more cycles of extension to give a linear hexaketide corresponding to the polyketide part of arthripenoids. The FAD-dependent monooxygenase atnJ then performs an oxidative decarboxylation at C11 of the atnH/atnG product, via an electrophilic aromatic hydroxylation with concomitant ipso-decarboxylation. The membrane-bound polyprenyl transferase atnF then introduces a farnesyl group before the FAD-dependent monooxygenase atnK functions as the first epoxidase on terminal C12'-C13' olefin, followed by a second epoxidation on C7'-C8' catalyzed by atnA. The terpene cyclase/mutase atnI then initiates the sequential tricyclic ring formation through protonation of the terminal epoxide and catalyzes the regioselective and stereoselective 6/6/6-tricyclic ring formation. The cytochrome P450 monooxygenase atnM is responsible for hydroxylating both C1' and C10'. The next steps may involve ketoreduction and acetyl transfer by the ketoreductase atnB and the acetyltransferase atnC, and lead to the production of arthripenoid B, the final biosynthetic product of the atn cluster. The hydroquinone moiety in arthripenoid B is prone to undergo spontaneous oxidation to afford a benzoquinone compound, a key intermediate for generating structure diversity. For instance, addition of a cysteine followed by ring contraction gives arthripenoid A, tautomerization gives the main product arthripenoid C, addition of a molecular of water or amine affords arthripenoid D or E, respectively, and loss of one water forms arthripenoid F. This Arthrinium sp protein is Terpene cyclase/mutase atnI.